The chain runs to 489 residues: Rhamnulokinase (489 aa).

13–17 contacts ATP; sequence ASSGR. Cys68 and Cys222 are oxidised to a cystine. Substrate is bound by residues Gly83 and 236-238; that span reads HDT. The Proton acceptor role is filled by Asp237. Thr259 contributes to the ATP binding site. Asn296 contacts substrate. Residue Gln304 coordinates ATP. A disulfide bond links Cys353 and Cys370. Position 402 (Gly402) interacts with ATP. Cys413 and Cys417 are oxidised to a cystine.

This sequence belongs to the rhamnulokinase family. Mg(2+) is required as a cofactor.

The catalysed reaction is L-rhamnulose + ATP = L-rhamnulose 1-phosphate + ADP + H(+). Its pathway is carbohydrate degradation; L-rhamnose degradation; glycerone phosphate from L-rhamnose: step 2/3. In terms of biological role, involved in the catabolism of L-rhamnose (6-deoxy-L-mannose). Catalyzes the transfer of the gamma-phosphate group from ATP to the 1-hydroxyl group of L-rhamnulose to yield L-rhamnulose 1-phosphate. This Salmonella typhimurium (strain LT2 / SGSC1412 / ATCC 700720) protein is Rhamnulokinase.